The following is a 202-amino-acid chain: Large ribosomal subunit protein eL13 (202 aa).

Residues 183-202 (GIREKRAKEKAEAEAEKAKK) form a disordered region.

Belongs to the eukaryotic ribosomal protein eL13 family. Component of the large ribosomal subunit. Mature ribosomes consist of a small (40S) and a large (60S) subunit. The 40S subunit contains about 32 different proteins and 1 molecule of RNA (18S). The 60S subunit contains 45 different proteins and 3 molecules of RNA (25S, 5.8S and 5S).

The protein localises to the cytoplasm. In terms of biological role, component of the ribosome, a large ribonucleoprotein complex responsible for the synthesis of proteins in the cell. The small ribosomal subunit (SSU) binds messenger RNAs (mRNAs) and translates the encoded message by selecting cognate aminoacyl-transfer RNA (tRNA) molecules. The large subunit (LSU) contains the ribosomal catalytic site termed the peptidyl transferase center (PTC), which catalyzes the formation of peptide bonds, thereby polymerizing the amino acids delivered by tRNAs into a polypeptide chain. The nascent polypeptides leave the ribosome through a tunnel in the LSU and interact with protein factors that function in enzymatic processing, targeting, and the membrane insertion of nascent chains at the exit of the ribosomal tunnel. In Candida albicans (strain SC5314 / ATCC MYA-2876) (Yeast), this protein is Large ribosomal subunit protein eL13.